The primary structure comprises 397 residues: Teichoic acid D-alanine hydrolase (397 aa).

A signal peptide spans 1–23 (MKFNKVKLVIHACVLLFIIISIA).

The protein resides in the cell membrane. It catalyses the reaction [(4-D-Ala)-(2-GlcNAc)-Rib-ol-P]n-[Gro-P]m-beta-D-ManNAc-(1-&gt;4)-alpha-D-GlcNAc-P-peptidoglycan + n H2O = [(2-GlcNAc)-Rib-ol-P]n-[Gro-P]m-beta-D-ManNAc-(1-&gt;4)-alpha-D-GlcNAc-P-peptidoglycan + n D-alanine.. Catalyzes the liberation of D-alanyl moieties present on wall teichoic acid (WTA) and lipoteichoic acid (LTA). Affects the methicillin resistance level and autolysis in the presence of Triton X-100 as well as the cell wall structure. This chain is Teichoic acid D-alanine hydrolase (fmtA), found in Staphylococcus aureus (strain NCTC 8325 / PS 47).